A 283-amino-acid polypeptide reads, in one-letter code: uncharacterized protein (283 aa).

The FAD-binding FR-type domain occupies 4–131 (RPLHAFEVVA…MGPGGAYAPD (128 aa)).

This is an uncharacterized protein from Mycobacterium bovis (strain ATCC BAA-935 / AF2122/97).